The primary structure comprises 370 residues: 3-dehydroquinate synthase (370 aa).

Residues glycine 107–aspartate 111, threonine 131–serine 132, lysine 144, and lysine 153 contribute to the NAD(+) site. Zn(2+) is bound by residues glutamate 186, histidine 249, and histidine 267.

The protein belongs to the sugar phosphate cyclases superfamily. Dehydroquinate synthase family. It depends on Co(2+) as a cofactor. Zn(2+) is required as a cofactor. The cofactor is NAD(+).

The protein localises to the cytoplasm. It catalyses the reaction 7-phospho-2-dehydro-3-deoxy-D-arabino-heptonate = 3-dehydroquinate + phosphate. It functions in the pathway metabolic intermediate biosynthesis; chorismate biosynthesis; chorismate from D-erythrose 4-phosphate and phosphoenolpyruvate: step 2/7. Catalyzes the conversion of 3-deoxy-D-arabino-heptulosonate 7-phosphate (DAHP) to dehydroquinate (DHQ). In Roseobacter denitrificans (strain ATCC 33942 / OCh 114) (Erythrobacter sp. (strain OCh 114)), this protein is 3-dehydroquinate synthase.